A 652-amino-acid polypeptide reads, in one-letter code: Threonine--tRNA ligase (652 aa).

The TGS domain occupies 1-63 (MAEISLTFPD…TESGDFQLIT (63 aa)). The segment at 246 to 545 (DHRVIGRDLD…LIEMYKGAFP (300 aa)) is catalytic. Zn(2+) contacts are provided by cysteine 340, histidine 391, and histidine 522.

This sequence belongs to the class-II aminoacyl-tRNA synthetase family. As to quaternary structure, homodimer. The cofactor is Zn(2+).

It is found in the cytoplasm. It carries out the reaction tRNA(Thr) + L-threonine + ATP = L-threonyl-tRNA(Thr) + AMP + diphosphate + H(+). In terms of biological role, catalyzes the attachment of threonine to tRNA(Thr) in a two-step reaction: L-threonine is first activated by ATP to form Thr-AMP and then transferred to the acceptor end of tRNA(Thr). Also edits incorrectly charged L-seryl-tRNA(Thr). This Leuconostoc mesenteroides subsp. mesenteroides (strain ATCC 8293 / DSM 20343 / BCRC 11652 / CCM 1803 / JCM 6124 / NCDO 523 / NBRC 100496 / NCIMB 8023 / NCTC 12954 / NRRL B-1118 / 37Y) protein is Threonine--tRNA ligase.